The following is a 384-amino-acid chain: Succinyl-diaminopimelate desuccinylase (384 aa).

His71 provides a ligand contact to Zn(2+). Residue Asp73 is part of the active site. Asp104 provides a ligand contact to Zn(2+). The active-site Proton acceptor is the Glu138. Residues Glu139, Glu167, and His357 each coordinate Zn(2+).

It belongs to the peptidase M20A family. DapE subfamily. As to quaternary structure, homodimer. Requires Zn(2+) as cofactor. The cofactor is Co(2+).

The enzyme catalyses N-succinyl-(2S,6S)-2,6-diaminopimelate + H2O = (2S,6S)-2,6-diaminopimelate + succinate. The protein operates within amino-acid biosynthesis; L-lysine biosynthesis via DAP pathway; LL-2,6-diaminopimelate from (S)-tetrahydrodipicolinate (succinylase route): step 3/3. Its function is as follows. Catalyzes the hydrolysis of N-succinyl-L,L-diaminopimelic acid (SDAP), forming succinate and LL-2,6-diaminopimelate (DAP), an intermediate involved in the bacterial biosynthesis of lysine and meso-diaminopimelic acid, an essential component of bacterial cell walls. The sequence is that of Succinyl-diaminopimelate desuccinylase from Blochmanniella floridana.